We begin with the raw amino-acid sequence, 379 residues long: Cytochrome b (379 aa).

Helical transmembrane passes span 34–54 (YGSLLGLCLVIQVLTGLFLSM), 78–99 (WLLRSIHANGASMFFLFIYLHA), 114–134 (WNIGVILFLLTMATAFMGYVL), and 179–199 (FFAFHFILPFAIMGATILHIM). Heme b-binding residues include histidine 84 and histidine 98. 2 residues coordinate heme b: histidine 183 and histidine 197. Histidine 202 provides a ligand contact to a ubiquinone. Helical transmembrane passes span 227 to 247 (IKDTLGYTLAISALSLMVLFE), 289 to 309 (LGGVMALFAAIVILFIPPLTS), 321 to 341 (LNKTMFWGLVASWAILTWIGG), and 349 to 369 (IIIGQVFTSLYFIYFISSPTI).

Belongs to the cytochrome b family. As to quaternary structure, the main subunits of complex b-c1 are: cytochrome b, cytochrome c1 and the Rieske protein. Heme b is required as a cofactor.

The protein localises to the mitochondrion inner membrane. Its function is as follows. Component of the ubiquinol-cytochrome c reductase complex (complex III or cytochrome b-c1 complex) that is part of the mitochondrial respiratory chain. The b-c1 complex mediates electron transfer from ubiquinol to cytochrome c. Contributes to the generation of a proton gradient across the mitochondrial membrane that is then used for ATP synthesis. The chain is Cytochrome b (MT-CYB) from Lumbricus terrestris (Common earthworm).